The sequence spans 461 residues: GTPase Der (461 aa).

2 consecutive EngA-type G domains span residues 2–166 and 199–370; these read IKVA…PKKP and IKVA…KNYS. GTP is bound by residues 8–15, 57–61, 118–121, 205–212, 252–256, and 316–319; these read GKPNVGKS, DTGGL, NKID, GRVNVGKS, DTAGI, and NKWD. One can recognise a KH-like domain in the interval 371–455; it reads KRIPTATLNK…PIIFVARKKG (85 aa).

It belongs to the TRAFAC class TrmE-Era-EngA-EngB-Septin-like GTPase superfamily. EngA (Der) GTPase family. As to quaternary structure, associates with the 50S ribosomal subunit.

Functionally, GTPase that plays an essential role in the late steps of ribosome biogenesis. This is GTPase Der from Nautilia profundicola (strain ATCC BAA-1463 / DSM 18972 / AmH).